The following is a 329-amino-acid chain: tRNA dimethylallyltransferase (329 aa).

12–19 (GPTSVGKT) is an ATP binding site. 14 to 19 (TSVGKT) contributes to the substrate binding site. The interval 37 to 40 (DSRY) is interaction with substrate tRNA. Residues 306–329 (LREESDEGDVAVHQSGGGKEAPRA) are disordered. The segment covering 320-329 (SGGGKEAPRA) has biased composition (gly residues).

Belongs to the IPP transferase family. In terms of assembly, monomer. Mg(2+) serves as cofactor.

The catalysed reaction is adenosine(37) in tRNA + dimethylallyl diphosphate = N(6)-dimethylallyladenosine(37) in tRNA + diphosphate. In terms of biological role, catalyzes the transfer of a dimethylallyl group onto the adenine at position 37 in tRNAs that read codons beginning with uridine, leading to the formation of N6-(dimethylallyl)adenosine (i(6)A). The polypeptide is tRNA dimethylallyltransferase (Thermomicrobium roseum (strain ATCC 27502 / DSM 5159 / P-2)).